Consider the following 189-residue polypeptide: Parkinson disease protein 7 homolog (189 aa).

The residue at position 2 (Ala2) is an N-acetylalanine. Residues Cys46 and Cys53 are each lipidated (S-palmitoyl cysteine). Tyr67 carries the post-translational modification Phosphotyrosine. Residue Cys106 is the Nucleophile of the active site. Cys106 is subject to Cysteine sulfinic acid (-SO2H); alternate. A lipid anchor (S-palmitoyl cysteine; alternate) is attached at Cys106. The active site involves His126. Lys130 participates in a covalent cross-link: Glycyl lysine isopeptide (Lys-Gly) (interchain with G-Cter in SUMO). Lys148 is subject to N6-acetyllysine. The residue at position 182 (Lys182) is an N6-succinyllysine.

This sequence belongs to the peptidase C56 family. Homodimer. Binds EFCAB6/DJBP and PIAS2. Part of a ternary complex containing PARK7, EFCAB6/DJBP and AR. Interacts (via N-terminus) with OTUD7B. Interacts with BBS1, HIPK1, CLCF1 and MTERF. Forms a complex with PINK1 and PRKN. Interacts (via C-terminus) with NCF1; the interaction is enhanced by LPS and modulates NCF1 phosphorylation and membrane translocation. Interacts with NENF. Deglycase activity does not require glutathione as a cofactor, however, glycated glutathione constitutes a PARK7 substrate. is required as a cofactor. Sumoylated on Lys-130 by PIAS2 or PIAS4; which is essential for cell-growth promoting activity and transforming activity. In terms of processing, undergoes cleavage of a C-terminal peptide and subsequent activation of protease activity in response to oxidative stress.

It localises to the cell membrane. It is found in the cytoplasm. Its subcellular location is the nucleus. The protein localises to the membrane raft. The protein resides in the mitochondrion. It localises to the endoplasmic reticulum. The catalysed reaction is N(omega)-(1-hydroxy-2-oxopropyl)-L-arginyl-[protein] + H2O = lactate + L-arginyl-[protein] + H(+). The enzyme catalyses N(6)-(1-hydroxy-2-oxopropyl)-L-lysyl-[protein] + H2O = lactate + L-lysyl-[protein] + H(+). It catalyses the reaction S-(1-hydroxy-2-oxopropyl)-L-cysteinyl-[protein] + H2O = lactate + L-cysteinyl-[protein] + H(+). It carries out the reaction N(omega)-(1-hydroxy-2-oxoethyl)-L-arginyl-[protein] + H2O = L-arginyl-[protein] + glycolate + H(+). The catalysed reaction is N(6)-(1-hydroxy-2-oxoethyl)-L-lysyl-[protein] + H2O = glycolate + L-lysyl-[protein] + H(+). The enzyme catalyses S-(1-hydroxy-2-oxoethyl)-L-cysteinyl-[protein] + H2O = glycolate + L-cysteinyl-[protein] + H(+). It catalyses the reaction N(2)-(1-hydroxy-2-oxopropyl)-dGTP + H2O = lactate + dGTP + H(+). It carries out the reaction N(2)-(1-hydroxy-2-oxopropyl)-GTP + H2O = lactate + GTP + H(+). The catalysed reaction is N(2)-(1-hydroxy-2-oxopropyl)-GDP + H2O = lactate + GDP + H(+). The enzyme catalyses N(2)-(1-hydroxy-2-oxopropyl)-GMP + H2O = lactate + GMP + H(+). It catalyses the reaction N(2)-(1-hydroxy-2-oxoethyl)-dGTP + H2O = dGTP + glycolate + H(+). It carries out the reaction N(2)-(1-hydroxy-2-oxoethyl)-GTP + H2O = glycolate + GTP + H(+). The catalysed reaction is N(2)-(1-hydroxy-2-oxoethyl)-GDP + H2O = glycolate + GDP + H(+). The enzyme catalyses N(2)-(1-hydroxy-2-oxoethyl)-GMP + H2O = glycolate + GMP + H(+). It catalyses the reaction an N(2)-(1-hydroxy-2-oxopropyl)-guanosine in RNA + H2O = a guanosine in RNA + lactate + H(+). It carries out the reaction an N(2)-(1-hydroxy-2-oxopropyl)-2'-deoxyguanosine in DNA + H2O = a 2'-deoxyguanosine in DNA + lactate + H(+). The catalysed reaction is an N(2)-(1-hydroxy-2-oxoethyl)-guanosine in RNA + H2O = a guanosine in RNA + glycolate + H(+). The enzyme catalyses an N(2)-(1-hydroxy-2-oxoethyl)-2'-deoxyguanosine in DNA + H2O = a 2'-deoxyguanosine in DNA + glycolate + H(+). Its function is as follows. Multifunctional protein with controversial molecular function which plays an important role in cell protection against oxidative stress and cell death acting as oxidative stress sensor and redox-sensitive chaperone and protease. It is involved in neuroprotective mechanisms like the stabilization of NFE2L2 and PINK1 proteins, male fertility as a positive regulator of androgen signaling pathway as well as cell growth and transformation through, for instance, the modulation of NF-kappa-B signaling pathway. Has been described as a protein and nucleotide deglycase that catalyzes the deglycation of the Maillard adducts formed between amino groups of proteins or nucleotides and reactive carbonyl groups of glyoxals. But this function is rebuted by other works. As a protein deglycase, repairs methylglyoxal- and glyoxal-glycated proteins, and releases repaired proteins and lactate or glycolate, respectively. Deglycates cysteine, arginine and lysine residues in proteins, and thus reactivates these proteins by reversing glycation by glyoxals. Acts on early glycation intermediates (hemithioacetals and aminocarbinols), preventing the formation of advanced glycation endproducts (AGE) that cause irreversible damage. Also functions as a nucleotide deglycase able to repair glycated guanine in the free nucleotide pool (GTP, GDP, GMP, dGTP) and in DNA and RNA. Is thus involved in a major nucleotide repair system named guanine glycation repair (GG repair), dedicated to reversing methylglyoxal and glyoxal damage via nucleotide sanitization and direct nucleic acid repair. Protects histones from adduction by methylglyoxal, controls the levels of methylglyoxal-derived argininine modifications on chromatin. Able to remove the glycations and restore histone 3, histone glycation disrupts both local and global chromatin architecture by altering histone-DNA interactions as well as histone acetylation and ubiquitination levels. Displays a very low glyoxalase activity that may reflect its deglycase activity. Eliminates hydrogen peroxide and protects cells against hydrogen peroxide-induced cell death. Required for correct mitochondrial morphology and function as well as for autophagy of dysfunctional mitochondria. Plays a role in regulating expression or stability of the mitochondrial uncoupling proteins SLC25A14 and SLC25A27 in dopaminergic neurons of the substantia nigra pars compacta and attenuates the oxidative stress induced by calcium entry into the neurons via L-type channels during pacemaking. Regulates astrocyte inflammatory responses, may modulate lipid rafts-dependent endocytosis in astrocytes and neuronal cells. In pancreatic islets, involved in the maintenance of mitochondrial reactive oxygen species (ROS) levels and glucose homeostasis in an age- and diet dependent manner. Protects pancreatic beta cells from cell death induced by inflammatory and cytotoxic setting. Binds to a number of mRNAs containing multiple copies of GG or CC motifs and partially inhibits their translation but dissociates following oxidative stress. Metal-binding protein able to bind copper as well as toxic mercury ions, enhances the cell protection mechanism against induced metal toxicity. In macrophages, interacts with the NADPH oxidase subunit NCF1 to direct NADPH oxidase-dependent ROS production, and protects against sepsis. This is Parkinson disease protein 7 homolog from Chlorocebus aethiops (Green monkey).